The following is a 290-amino-acid chain: Pirin (290 aa).

Fe cation-binding residues include histidine 56, histidine 58, histidine 101, and glutamate 103.

It belongs to the pirin family. As to quaternary structure, may interact with NF1/CTF1. Interacts with BCL3. Identified in a complex comprised of PIR, BLC3, NFKB1 and target DNA. It depends on Fe cation as a cofactor. As to expression, highly expressed in a subset of melanomas. Detected at very low levels in most tissues (at protein level). Expressed in all tissues, with highest level of expression in heart and liver.

Its subcellular location is the nucleus. The protein localises to the cytoplasm. It carries out the reaction quercetin + O2 = 2-(3,4-dihydroxybenzoyloxy)-4,6-dihydroxybenzoate + CO. It participates in flavonoid metabolism; quercetin degradation. With respect to regulation, inhibited by kojic acid, sodium diethyldithiocarbamate and 1,10-phenanthroline monohydrochloride. Its function is as follows. Transcriptional coregulator of NF-kappa-B which facilitates binding of NF-kappa-B proteins to target kappa-B genes in a redox-state-dependent manner. May be required for efficient terminal myeloid maturation of hematopoietic cells. Has quercetin 2,3-dioxygenase activity (in vitro). In Homo sapiens (Human), this protein is Pirin (PIR).